Here is a 396-residue protein sequence, read N- to C-terminus: S-adenosylmethionine synthase 1 (396 aa).

E13 is a Mg(2+) binding site. An ATP-binding site is contributed by H19. Residue E47 participates in K(+) binding. E60 and Q103 together coordinate L-methionine. Residues 171 to 173 (DGK), 239 to 242 (SGRF), D250, 256 to 257 (RK), A273, K277, and K281 each bind ATP. D250 lines the L-methionine pocket. An L-methionine-binding site is contributed by K281.

The protein belongs to the AdoMet synthase family. In terms of assembly, homotetramer. The cofactor is Mn(2+). It depends on Mg(2+) as a cofactor. Requires Co(2+) as cofactor. K(+) serves as cofactor.

It is found in the cytoplasm. The catalysed reaction is L-methionine + ATP + H2O = S-adenosyl-L-methionine + phosphate + diphosphate. It participates in amino-acid biosynthesis; S-adenosyl-L-methionine biosynthesis; S-adenosyl-L-methionine from L-methionine: step 1/1. Its function is as follows. Catalyzes the formation of S-adenosylmethionine from methionine and ATP. The reaction comprises two steps that are both catalyzed by the same enzyme: formation of S-adenosylmethionine (AdoMet) and triphosphate, and subsequent hydrolysis of the triphosphate. May be involved in the synthesis of betain in response to abiotic stress such as high salinity. This Beta vulgaris (Sugar beet) protein is S-adenosylmethionine synthase 1 (SAMS1).